Here is a 363-residue protein sequence, read N- to C-terminus: Inactive CLIP domain-containing serine protease A8 (363 aa).

The N-terminal stretch at 1–25 (MPSWWCCCCLVVLLYAQRMIVPSSA) is a signal peptide. Residues 33 to 82 (LQECPGGFCSPKYLCPNGTYNEANAQNQEIIMLRFGEEDVCQDYMQVCCS) form the Clip domain. 3 cysteine pairs are disulfide-bonded: Cys-36/Cys-80, Cys-41/Cys-73, and Cys-47/Cys-81. Residues Asn-49, Asn-83, Asn-117, and Asn-166 are each glycosylated (N-linked (GlcNAc...) asparagine). In terms of domain architecture, Peptidase S1 spans 114 to 360 (VEGNRTYAQY…FVTWINATIE (247 aa)). 3 disulfide bridges follow: Cys-245–Cys-317, Cys-276–Cys-297, and Cys-307–Cys-336. N-linked (GlcNAc...) asparagine glycosylation is found at Asn-319 and Asn-356.

Belongs to the peptidase S1 family. CLIP subfamily. As to quaternary structure, heterodimer of a light chain and a heavy chain; disulfide-linked. Post-translationally, secreted as a full-length protein. Proteolytically cleaved into two chains which remain covalently linked. Cleavage is induced by Gram-positive or Gram-negative bacteria infection.

The protein localises to the secreted. In terms of biological role, inactive serine protease which plays an essential role in the innate immune response against bacteria, fungi and protozoa infection by activating the melanization cascade. In the melanization cascade, acts downstream of TEP1 and SPCLIP1 to promote CLIPA28 and CLIPC9 proteolytic cleavage and CLIPC9 recruitment to microbial surfaces. In the resistant strain L3-5, required for the melanization of killed parasite P.berghei ookinetes which results in their clearance. In the susceptible strain G3, appears to be dispensable for ookinete elimination which occurs by lysis. Required for the melanization of Gram-positive and Gram-negative bacteria. During the late stage of fungus B.bassiana-mediated infection, required for the initiation of hyphae melanization by promoting prophenoloxidase PPO activation. The protein is Inactive CLIP domain-containing serine protease A8 of Anopheles gambiae (African malaria mosquito).